The sequence spans 334 residues: Protein-methionine-sulfoxide reductase catalytic subunit MsrP (334 aa).

Residues Met1–Ala44 constitute a signal peptide (tat-type signal). Residues Asn88, Tyr91–Glu92, Cys146, Thr181, Asn233, Arg238, and Gly249–Lys251 contribute to the Mo-molybdopterin site.

It belongs to the MsrP family. In terms of assembly, heterodimer of a catalytic subunit (MsrP) and a heme-binding subunit (MsrQ). Mo-molybdopterin is required as a cofactor. Post-translationally, predicted to be exported by the Tat system. The position of the signal peptide cleavage has not been experimentally proven.

The protein localises to the periplasm. It carries out the reaction L-methionyl-[protein] + a quinone + H2O = L-methionyl-(S)-S-oxide-[protein] + a quinol. It catalyses the reaction L-methionyl-[protein] + a quinone + H2O = L-methionyl-(R)-S-oxide-[protein] + a quinol. Functionally, part of the MsrPQ system that repairs oxidized periplasmic proteins containing methionine sulfoxide residues (Met-O), using respiratory chain electrons. Thus protects these proteins from oxidative-stress damage caused by reactive species of oxygen and chlorine generated by the host defense mechanisms. MsrPQ is essential for the maintenance of envelope integrity under bleach stress, rescuing a wide series of structurally unrelated periplasmic proteins from methionine oxidation, including the primary periplasmic chaperone SurA and the lipoprotein Pal. The catalytic subunit MsrP is non-stereospecific, being able to reduce both (R-) and (S-) diastereoisomers of methionine sulfoxide. The polypeptide is Protein-methionine-sulfoxide reductase catalytic subunit MsrP (Shigella dysenteriae serotype 1 (strain Sd197)).